The sequence spans 301 residues: tRNA dimethylallyltransferase (301 aa).

9 to 16 (GPTASGKS) contributes to the ATP binding site. 11 to 16 (TASGKS) provides a ligand contact to substrate. The tract at residues 34 to 37 (DSMQ) is interaction with substrate tRNA.

Belongs to the IPP transferase family. In terms of assembly, monomer. The cofactor is Mg(2+).

The enzyme catalyses adenosine(37) in tRNA + dimethylallyl diphosphate = N(6)-dimethylallyladenosine(37) in tRNA + diphosphate. Catalyzes the transfer of a dimethylallyl group onto the adenine at position 37 in tRNAs that read codons beginning with uridine, leading to the formation of N6-(dimethylallyl)adenosine (i(6)A). The sequence is that of tRNA dimethylallyltransferase from Corynebacterium glutamicum (strain ATCC 13032 / DSM 20300 / JCM 1318 / BCRC 11384 / CCUG 27702 / LMG 3730 / NBRC 12168 / NCIMB 10025 / NRRL B-2784 / 534).